Reading from the N-terminus, the 388-residue chain is MKRNFPKLIALSLILSLSVTPIANAESNSNIKAKDKKHVQVNVEDKSIPTEVRNLAQKDYLSYVTSLDKIYNKEKASYTLGEPFKIYKFNKKSDGNYYFPVLNTEGNIDYIVTISPKVTKYSSSSSKYTINVSPFLSKVLNQYKDQQITILTNSKGYYVVTQNHKAKLVLKTPRLEDKKLKKTESIPTGNNVTQLKQKASVTMPTSQFKSNNYTYNEQYVNKLENFKIRETQGNNGWCAGYTMSALLNATYNTNKYHAEAVMRFLHPNLQGQRFQFTGLTPREMIYFGQTQGRSPQLLNRMTTYNEVDNLTKNNKGIAVLGSRVESRNGMHAGHAMAVVGNAKLDNGQEVIIIWNPWDNGFMTQDAKNNVIPVSNGDHYQWYSSIYGY.

The signal sequence occupies residues 1–25 (MKRNFPKLIALSLILSLSVTPIANA). A propeptide spanning residues 26 to 214 (ESNSNIKAKD…TSQFKSNNYT (189 aa)) is cleaved from the precursor. Active-site residues include Cys-238, His-334, and Asn-355.

Belongs to the peptidase C47 family. In the cytoplasm, prematurely activated/folded ScpA forms a stable non-covalent complex with ScpB. Post-translationally, cleavage leads to the activation of ScpA probably by an auto-catalytic manner.

Its subcellular location is the secreted. It carries out the reaction Broad endopeptidase action on proteins including elastin, but rather limited hydrolysis of small-molecule substrates. Assays are conveniently made with hemoglobin, casein or Z-Phe-Arg-NHMec as substrate.. Its activity is regulated as follows. Prematurely activated/folded staphopain A is inhibited by staphostatin A (ScpB), which is probably required to protect staphylococcal cytoplasmic proteins from degradation by ScpA. Cysteine protease that plays an important role in the inhibition of host innate immune response. Cleaves host elastins found in connective tissues, pulmonary surfactant protein A in the lungs, and the chemokine receptor CXCR2 on leukocytes. Proteolytic cleavage of surfactant protein A impairs bacterial phagocytosis by neutrophils while CXCR2 degradation blocks neutrophil activation and chemotaxis. Additionally, promotes vascular leakage by activating the plasma kallikerin/kinin system, resulting in hypotension. In Staphylococcus aureus (strain MSSA476), this protein is Staphopain A (sspP).